The primary structure comprises 162 residues: Nitrogen regulatory protein (162 aa).

Residues 12 to 156 (NVLNQECTRS…EELYEIITEA (145 aa)) form the PTS EIIA type-2 domain. The active-site Tele-phosphohistidine intermediate is histidine 73.

It is found in the cytoplasm. Seems to have a role in regulating nitrogen assimilation. This chain is Nitrogen regulatory protein (ptsN), found in Klebsiella oxytoca.